The chain runs to 250 residues: 4-hydroxy-tetrahydrodipicolinate reductase (250 aa).

Residues 10–15, 78–80, and 105–108 each bind NAD(+); these read GAKGRI, GTT, and APNF. His135 serves as the catalytic Proton donor/acceptor. Residue His136 participates in (S)-2,3,4,5-tetrahydrodipicolinate binding. Catalysis depends on Lys139, which acts as the Proton donor. (S)-2,3,4,5-tetrahydrodipicolinate is bound at residue 145-146; that stretch reads GT.

Belongs to the DapB family.

It is found in the cytoplasm. The enzyme catalyses (S)-2,3,4,5-tetrahydrodipicolinate + NAD(+) + H2O = (2S,4S)-4-hydroxy-2,3,4,5-tetrahydrodipicolinate + NADH + H(+). It catalyses the reaction (S)-2,3,4,5-tetrahydrodipicolinate + NADP(+) + H2O = (2S,4S)-4-hydroxy-2,3,4,5-tetrahydrodipicolinate + NADPH + H(+). The protein operates within amino-acid biosynthesis; L-lysine biosynthesis via DAP pathway; (S)-tetrahydrodipicolinate from L-aspartate: step 4/4. Functionally, catalyzes the conversion of 4-hydroxy-tetrahydrodipicolinate (HTPA) to tetrahydrodipicolinate. This is 4-hydroxy-tetrahydrodipicolinate reductase from Streptomyces coelicolor (strain ATCC BAA-471 / A3(2) / M145).